The following is a 366-amino-acid chain: MDTFWWRAAWGLCLVQLSLAQIDLNITCRYAGVFHVEKNGRYSISKTEAADLCKAFNSTLPTMAQMEAARNIGFETCRYGFIEGHVVIPRIHPNSICAANNTGVYILTSNTSQYDTICFNASAPPGEDCTSVTDLPNAFEGPITITIVNRDGTRYTKKGEYRTNPEDINPSVVSPSSPPDDEMSSGSPSERSTSGGYSIFHTHLPTVHPSRPRRPWSQRAENTSDTRDYGSSHDPSGRSYTTHASESAGHSSGSEEHGANTTSGPMRKPQIPEWLIILASLLALALILAVCIAVNSRRRCGQKKKLVINNGNGTMEERKPSGLNGEASKSQEMVHLVNKGSSETPDQFMTADETRNLQNVDMKIGV.

The signal sequence occupies residues 1 to 20 (MDTFWWRAAWGLCLVQLSLA). Residues 21 to 273 (QIDLNITCRY…GPMRKPQIPE (253 aa)) are Extracellular-facing. N-linked (GlcNAc...) asparagine glycosylation is present at N25. Cystine bridges form between C28–C129, C53–C118, and C77–C97. A Link domain is found at 32 to 120 (GVFHVEKNGR…TSQYDTICFN (89 aa)). Residue R41 participates in hyaluronan binding. N57 carries N-linked (GlcNAc...) asparagine glycosylation. Hyaluronan-binding residues include R78 and Y79. N100 is a glycosylation site (N-linked (GlcNAc...) asparagine). Position 105 (Y105) interacts with hyaluronan. N110 and N120 each carry an N-linked (GlcNAc...) asparagine glycan. Over residues 156–165 (TKKGEYRTNP) the composition is skewed to basic and acidic residues. The tract at residues 156–266 (TKKGEYRTNP…HGANTTSGPM (111 aa)) is disordered. The segment covering 184 to 196 (SSGSPSERSTSGG) has biased composition (low complexity). An O-linked (Xyl...) (chondroitin sulfate) serine glycan is attached at S185. N-linked (GlcNAc...) asparagine glycosylation occurs at N222. Residues 222 to 231 (NTSDTRDYGS) show a composition bias toward basic and acidic residues. The segment at 229–273 (YGSSHDPSGRSYTTHASESAGHSSGSEEHGANTTSGPMRKPQIPE) is stem. Over residues 243–252 (HASESAGHSS) the composition is skewed to low complexity. An N-linked (GlcNAc...) asparagine glycan is attached at N260. Residues 274–294 (WLIILASLLALALILAVCIAV) form a helical membrane-spanning segment. Topologically, residues 295 to 366 (NSRRRCGQKK…LQNVDMKIGV (72 aa)) are cytoplasmic. S296 bears the Phosphoserine; by PKC mark. The segment at 297 to 315 (RRRCGQKKKLVINNGNGTM) is required for interaction with EZR, MSN and RDX and for co-localization to microvilli. At T314 the chain carries Phosphothreonine. Residues S321 and S330 each carry the phosphoserine modification.

Interacts with PKN2. Interacts with TIAM1 and TIAM2. Interacts with HA, as well as other glycosaminoglycans, collagen, laminin, and fibronectin via its N-terminal segment. Interacts with UNC119. Interacts with PDPN (via extracellular domain); this interaction is required for PDPN-mediated directional migration and regulation of lamellipodia extension/stabilization during cell spreading and migration. Interacts with RDX, EZR and MSN. Interacts with EGFR. Interacts with CD74; this complex is essential for the MIF-induced signaling cascade that results in B cell survival. N-glycosylated. Post-translationally, O-glycosylated; contains chondroitin sulfate glycans which can be more or less sulfated. In terms of processing, phosphorylated; activation of PKC results in the dephosphorylation of Ser-330 (constitutive phosphorylation site), and the phosphorylation of Ser-296. In terms of tissue distribution, mesenteric lymph node and liver, not in heart.

The protein localises to the cell membrane. It is found in the cell projection. It localises to the microvillus. The protein resides in the secreted. Cell-surface receptor that plays a role in cell-cell interactions, cell adhesion and migration, helping them to sense and respond to changes in the tissue microenvironment. Participates thereby in a wide variety of cellular functions including the activation, recirculation and homing of T-lymphocytes, hematopoiesis, inflammation and response to bacterial infection. Engages, through its ectodomain, extracellular matrix components such as hyaluronan/HA, collagen, growth factors, cytokines or proteases and serves as a platform for signal transduction by assembling, via its cytoplasmic domain, protein complexes containing receptor kinases and membrane proteases. Such effectors include PKN2, the RhoGTPases RAC1 and RHOA, Rho-kinases and phospholipase C that coordinate signaling pathways promoting calcium mobilization and actin-mediated cytoskeleton reorganization essential for cell migration and adhesion. In Bos taurus (Bovine), this protein is CD44 antigen (CD44).